We begin with the raw amino-acid sequence, 284 residues long: MEMO1 family protein LS215_2219 (284 aa).

It belongs to the MEMO1 family.

This Saccharolobus islandicus (strain L.S.2.15 / Lassen #1) (Sulfolobus islandicus) protein is MEMO1 family protein LS215_2219.